Reading from the N-terminus, the 118-residue chain is Large ribosomal subunit protein bL20c (118 aa).

The protein belongs to the bacterial ribosomal protein bL20 family.

It localises to the plastid. Its function is as follows. Binds directly to 23S ribosomal RNA and is necessary for the in vitro assembly process of the 50S ribosomal subunit. It is not involved in the protein synthesizing functions of that subunit. This Cuscuta reflexa (Southern Asian dodder) protein is Large ribosomal subunit protein bL20c (rpl20).